A 225-amino-acid chain; its full sequence is Respiratory nitrate reductase 1 gamma chain (225 aa).

Methionine 1 carries the N-formylmethionine modification. Residues 1-3 (MQF) are Periplasmic-facing. The chain crosses the membrane as a helical span at residues 4–29 (LNMFFFDIYPYIAGAVFLIGSWLRYD). Topologically, residues 30-47 (YGQYTWRAASSQMLDRKG) are cytoplasmic. The helical transmembrane segment at 48–70 (MNLASNLFHIGILGIFVGHFFGM) threads the bilayer. Residues histidine 56 and histidine 66 each coordinate heme b. The Periplasmic segment spans residues 71 to 82 (LTPHWMYEAWLP). The chain crosses the membrane as a helical span at residues 83–112 (IEVKQKMAMFAGGASGVLCLIGGVLLLKRR). The Cytoplasmic segment spans residues 113 to 124 (LFSPRVRATTTG). Residues 125–148 (ADILILSLLVIQCALGLLTIPFSA) traverse the membrane as a helical segment. Residues 149–182 (QHMDGSEMMKLVGWAQSVVTFHGGASQHLDGVAF) are Periplasmic-facing. The helical transmembrane segment at 183–198 (IFRLHLVLGMTLFLLF) threads the bilayer. Heme b is bound by residues histidine 187 and histidine 205. Topologically, residues 199–225 (PFSRLIHIWSVPVEYLTRKYQLVRARH) are cytoplasmic.

In terms of assembly, dimer of heterotrimers each composed of an alpha, a beta and a gamma chain. Alpha and beta are catalytic chains; gamma chains are involved in binding the enzyme complex to the cytoplasmic membrane. It depends on heme as a cofactor.

Its subcellular location is the cell inner membrane. The catalysed reaction is nitrate + a quinol = a quinone + nitrite + H2O. Its function is as follows. The nitrate reductase enzyme complex allows E.coli to use nitrate as an electron acceptor during anaerobic growth. The gamma chain is a membrane-embedded heme-iron unit resembling cytochrome b, which transfers electrons from quinones to the beta subunit. The protein is Respiratory nitrate reductase 1 gamma chain (narI) of Escherichia coli (strain K12).